A 540-amino-acid polypeptide reads, in one-letter code: Cytochrome P450 monooxygenase CYP3 (540 aa).

Asn2 carries an N-linked (GlcNAc...) asparagine glycan. The chain crosses the membrane as a helical span at residues 26–46 (IFGLSSSTLVVLVAMIAVSTL). N-linked (GlcNAc...) asparagine glycans are attached at residues Asn100, Asn210, and Asn400. Position 471 (Cys471) interacts with heme.

The protein belongs to the cytochrome P450 family. Heme serves as cofactor.

It is found in the membrane. It functions in the pathway secondary metabolite biosynthesis. Functionally, cytochrome P450 monooxygenase; part of the gene cluster that mediates the biosynthesis of itaconic acid and 2-hydroxyparaconate. Cis-aconitate is secreted by the mitochondrial tricarboxylate transporter MTT1. In the cytosol cis-aconitate is converted into trans-aconitate via isomerization by the aconitate-delta-isomerase ADI1. Decarboxylation of trans-aconitate by the trans-aconitate decarboxylase TAD1 then leads then to the production of itaconic acid. The cytochrome P450 monooxygenase CYP3 further converts itaconate to 2-hydroxyparaconate via oxidation of the double bond, leading to a transient epoxide, which can subsequently be lactonized to produce 2-hydroxyparaconate. Secretion of itaconate and possibly 2-hydroxyparaconate into the medium is mediated by the major facilitator ITP1. The glyoxalase domain-containing protein RDO1 is not involved in the biosynthesis of itaconate and 2-hydroxyparaconate, however, it might play a role in the further conversion of 2-hydroxyparaconate to itatartarate. This chain is Cytochrome P450 monooxygenase CYP3, found in Mycosarcoma maydis (Corn smut fungus).